The sequence spans 95 residues: Small ribosomal subunit protein uS19 (95 aa).

The protein belongs to the universal ribosomal protein uS19 family.

Its function is as follows. Protein S19 forms a complex with S13 that binds strongly to the 16S ribosomal RNA. The protein is Small ribosomal subunit protein uS19 of Chloroflexus aurantiacus (strain ATCC 29366 / DSM 635 / J-10-fl).